The chain runs to 162 residues: Austinoid biosynthesis clusters protein J (162 aa).

This sequence belongs to the trt14 isomerase family. As to quaternary structure, homodimer.

The protein operates within secondary metabolite biosynthesis; terpenoid biosynthesis. In terms of biological role, part of the gene cluster B that mediates the biosynthesis of austinol and dehydroaustinol, two fungal meroterpenoids. The first step of the pathway is the synthesis of 3,5-dimethylorsellinic acid by the polyketide synthase ausA. 3,5-dimethylorsellinic acid is then prenylated by the polyprenyl transferase ausN. Further epoxidation by the FAD-dependent monooxygenase ausM and cyclization by the probable terpene cyclase ausL lead to the formation of protoaustinoid A. Protoaustinoid A is then oxidized to spiro-lactone preaustinoid A3 by the combined action of the FAD-binding monooxygenases ausB and ausC, and the dioxygenase ausE. Acid-catalyzed keto-rearrangement and ring contraction of the tetraketide portion of preaustinoid A3 by ausJ lead to the formation of preaustinoid A4. The aldo-keto reductase ausK, with the help of ausH, is involved in the next step by transforming preaustinoid A4 into isoaustinone which is in turn hydroxylated by the P450 monooxygenase ausI to form austinolide. Finally, the cytochrome P450 monooxygenase ausG modifies austinolide to austinol. Austinol can be further modified to dehydroaustinol which forms a diffusible complex with diorcinol that initiates conidiation. Due to genetic rearrangements of the clusters and the subsequent loss of some enzymes, the end products of the Emericella nidulans austinoid biosynthesis clusters are austinol and dehydroaustinol, even if additional enzymes, such as the O-acetyltransferase ausQ and the cytochrome P450 monooxygenase ausR are still functional. The sequence is that of Austinoid biosynthesis clusters protein J from Emericella nidulans (strain FGSC A4 / ATCC 38163 / CBS 112.46 / NRRL 194 / M139) (Aspergillus nidulans).